We begin with the raw amino-acid sequence, 129 residues long: MKKFNVTVNGTAYDVEVNEVKAAAPAAAPKAAPAAAPAPKAAPAPAPAPAAAAAPVPAGAETVKAPMPGKILSVAVSAGQAVKKGETLLILEAMKMQNEIAAPHDAVVSEVRVSANQTVSTGDDMVVLG.

Composition is skewed to low complexity over residues 24–39 and 49–58; these read APAA…APAP and PAAAAAPVPA. The tract at residues 24–58 is disordered; the sequence is APAAAPKAAPAAAPAPKAAPAPAPAPAAAAAPVPA. Positions 51-129 constitute a Biotinyl-binding domain; that stretch reads AAAAPVPAGA…STGDDMVVLG (79 aa). At lysine 95 the chain carries N6-biotinyllysine.

The methylmalonyl-CoA decarboxylase is composed of five subunits: the carboxyltransferase alpha subunit (MmdA), the tunnel beta subunit (MmdB), the biotin-containing gamma subunit (MmdC), and the delta (MmdD) and epsilon (MmdE) subunits. The cofactor is biotin.

The protein resides in the cell membrane. The enzyme catalyses (S)-methylmalonyl-CoA + Na(+)(in) + H(+)(out) = propanoyl-CoA + Na(+)(out) + CO2. Its activity is regulated as follows. Completely inhibited by avidin. Functionally, biotin-containing subunit of the sodium ion pump methylmalonyl-CoA decarboxylase, which converts the chemical energy of a decarboxylation reaction into an electrochemical gradient of Na(+) ions across the cytoplasmic membrane, thereby creating a sodium ion motive force that is used for ATP synthesis. Can also convert malonyl-CoA into acetyl-CoA. The protein is Methylmalonyl-CoA decarboxylase subunit gamma of Veillonella parvula (Staphylococcus parvulus).